A 155-amino-acid polypeptide reads, in one-letter code: Transcriptional repressor NrdR (155 aa).

The segment at 1–24 (MRCPYCGHEDSQVKDSRPTEDGAA) is disordered. A zinc finger lies at 3 to 34 (CPYCGHEDSQVKDSRPTEDGAAIRRRRQCEDC). Residues 7–24 (GHEDSQVKDSRPTEDGAA) are compositionally biased toward basic and acidic residues. Residues 49 to 139 (VVVIKAGGTR…VYRDFTEARD (91 aa)) enclose the ATP-cone domain.

Belongs to the NrdR family. The cofactor is Zn(2+).

Negatively regulates transcription of bacterial ribonucleotide reductase nrd genes and operons by binding to NrdR-boxes. The polypeptide is Transcriptional repressor NrdR (Sphingopyxis alaskensis (strain DSM 13593 / LMG 18877 / RB2256) (Sphingomonas alaskensis)).